We begin with the raw amino-acid sequence, 378 residues long: Histidinol-phosphate aminotransferase (378 aa).

Residues 1–20 (MSVSAKETQRHPARPEPRPG) are disordered. Residues 7–17 (ETQRHPARPEP) show a composition bias toward basic and acidic residues. Lysine 232 carries the post-translational modification N6-(pyridoxal phosphate)lysine.

This sequence belongs to the class-II pyridoxal-phosphate-dependent aminotransferase family. Histidinol-phosphate aminotransferase subfamily. In terms of assembly, homodimer. Requires pyridoxal 5'-phosphate as cofactor.

It carries out the reaction L-histidinol phosphate + 2-oxoglutarate = 3-(imidazol-4-yl)-2-oxopropyl phosphate + L-glutamate. The protein operates within amino-acid biosynthesis; L-histidine biosynthesis; L-histidine from 5-phospho-alpha-D-ribose 1-diphosphate: step 7/9. This Azorhizobium caulinodans (strain ATCC 43989 / DSM 5975 / JCM 20966 / LMG 6465 / NBRC 14845 / NCIMB 13405 / ORS 571) protein is Histidinol-phosphate aminotransferase.